Consider the following 718-residue polypeptide: Nucleolar protein 11 (718 aa).

An N6-methyllysine modification is found at K346.

As to quaternary structure, interacts with UTP4. Interacts with FBL/fibrillarin in a transcription-dependent manner. May associate with the proposed t-UTP subcomplex of the SSU processome containing at least UTP4, WDR43, HEATR1, UTP15, WDR75.

Its subcellular location is the nucleus. The protein localises to the nucleolus. In terms of biological role, ribosome biogenesis factor. May be required for both optimal rDNA transcription and small subunit (SSU) pre-rRNA processing at sites A', A0, 1 and 2b. The protein is Nucleolar protein 11 (NOL11) of Pongo abelii (Sumatran orangutan).